Here is a 618-residue protein sequence, read N- to C-terminus: NAD(P)H-quinone oxidoreductase subunit 5, organellar chromatophore 2 (618 aa).

Transmembrane regions (helical) follow at residues Leu16–Ile36, Thr43–Leu63, Leu99–Tyr119, Phe129–Leu149, Ser152–Ala172, Gly190–Phe210, Asn220–Gly240, Ser267–Ser287, Ile291–Ala311, Thr318–Ala335, Ala348–Asn368, Leu390–Leu410, Ala419–Thr438, Trp461–Met481, Ala495–Val515, Ile553–Val573, and Ser597–Val617.

The protein belongs to the complex I subunit 5 family. As to quaternary structure, NDH is composed of at least 16 different subunits, 5 of which are encoded in the nucleus.

Its subcellular location is the plastid. The protein localises to the organellar chromatophore thylakoid membrane. The enzyme catalyses a plastoquinone + NADH + (n+1) H(+)(in) = a plastoquinol + NAD(+) + n H(+)(out). The catalysed reaction is a plastoquinone + NADPH + (n+1) H(+)(in) = a plastoquinol + NADP(+) + n H(+)(out). NDH shuttles electrons from NAD(P)H:plastoquinone, via FMN and iron-sulfur (Fe-S) centers, to quinones in the photosynthetic chain and possibly in a chloroplast respiratory chain. The immediate electron acceptor for the enzyme in this species is believed to be plastoquinone. Couples the redox reaction to proton translocation, and thus conserves the redox energy in a proton gradient. This chain is NAD(P)H-quinone oxidoreductase subunit 5, organellar chromatophore 2 (ndhF2), found in Paulinella chromatophora.